Here is a 466-residue protein sequence, read N- to C-terminus: Tryptophan synthase beta chain 2, chloroplastic (466 aa).

Lys161 is modified (N6-(pyridoxal phosphate)lysine).

The protein belongs to the TrpB family. Tetramer of two alpha and two beta chains. Requires pyridoxal 5'-phosphate as cofactor.

The protein localises to the plastid. Its subcellular location is the chloroplast. It carries out the reaction (1S,2R)-1-C-(indol-3-yl)glycerol 3-phosphate + L-serine = D-glyceraldehyde 3-phosphate + L-tryptophan + H2O. It functions in the pathway amino-acid biosynthesis; L-tryptophan biosynthesis; L-tryptophan from chorismate: step 5/5. The beta subunit is responsible for the synthesis of L-tryptophan from indole and L-serine. The chain is Tryptophan synthase beta chain 2, chloroplastic (TSB) from Camptotheca acuminata (Happy tree).